The sequence spans 147 residues: Nudix hydrolase 1 (147 aa).

N-acetylserine is present on S2. Residues 7 to 140 form the Nudix hydrolase domain; it reads IPRVAVVVFI…EKLFGSGFNP (134 aa). Positions 41–62 match the Nudix box motif; the sequence is GHLEFGESFEECAAREVMEETG. The Mg(2+) site is built by E56 and E60.

Belongs to the Nudix hydrolase family. Homodimer. It depends on Mg(2+) as a cofactor. Requires Mn(2+) as cofactor. In terms of tissue distribution, expressed in roots, stems and leaves.

Its subcellular location is the cytoplasm. The enzyme catalyses 7,8-dihydroneopterin 3'-triphosphate + H2O = 7,8-dihydroneopterin 3'-phosphate + diphosphate + H(+). It carries out the reaction NAD(+) + H2O = beta-nicotinamide D-ribonucleotide + AMP + 2 H(+). The catalysed reaction is NADH + H2O = reduced beta-nicotinamide D-ribonucleotide + AMP + 2 H(+). It catalyses the reaction 8-oxo-dGTP + H2O = 8-oxo-dGMP + diphosphate + H(+). In terms of biological role, mediates the hydrolysis of some nucleoside diphosphate derivatives. Its substrate specificity is unclear. In vitro, it can use NTP, dNTP, 8-oxo-GTP, 8-oxo-dGTP, dGTP, dATP, dTTP or dihydroneopterin triphosphate (DHNTP) as substrate. Has some NADH pyrophosphatase activity in vitro; however, such activity may not be relevant in vivo due to the high concentration of manganese used during the experiments. Plays an important role in protection against oxidative DNA and RNA damage by removing oxidatively damaged form of guanine. The protein is Nudix hydrolase 1 (NUDT1) of Arabidopsis thaliana (Mouse-ear cress).